The following is a 292-amino-acid chain: Ribosomal protein L11 methyltransferase (292 aa).

S-adenosyl-L-methionine contacts are provided by T144, G165, D187, and N229.

Belongs to the methyltransferase superfamily. PrmA family.

It is found in the cytoplasm. It catalyses the reaction L-lysyl-[protein] + 3 S-adenosyl-L-methionine = N(6),N(6),N(6)-trimethyl-L-lysyl-[protein] + 3 S-adenosyl-L-homocysteine + 3 H(+). Its function is as follows. Methylates ribosomal protein L11. This chain is Ribosomal protein L11 methyltransferase, found in Pseudomonas savastanoi pv. phaseolicola (strain 1448A / Race 6) (Pseudomonas syringae pv. phaseolicola (strain 1448A / Race 6)).